Here is a 435-residue protein sequence, read N- to C-terminus: 26S proteasome regulatory subunit 7 (435 aa).

A compositionally biased stretch (basic and acidic residues) spans Met1–Asn23. Residues Met1–Phe24 are disordered. Residue Gly218 to Thr225 coordinates ATP.

The protein belongs to the AAA ATPase family.

It localises to the cytoplasm. Its subcellular location is the nucleus. Its function is as follows. The 26S proteasome is involved in the ATP-dependent degradation of ubiquitinated proteins. The regulatory (or ATPase) complex confers ATP dependency and substrate specificity to the 26S complex. The polypeptide is 26S proteasome regulatory subunit 7 (rpt-1) (Caenorhabditis elegans).